Reading from the N-terminus, the 454-residue chain is Bifunctional protein GlmU (454 aa).

The interval 1 to 227 is pyrophosphorylase; that stretch reads MKKLSVVILA…KMEVEGANNR (227 aa). UDP-N-acetyl-alpha-D-glucosamine is bound by residues 9 to 12, Lys23, Gln74, 79 to 80, 101 to 103, Gly138, Glu152, Asn167, and Asn225; these read LAAG, GT, and YGD. Asp103 lines the Mg(2+) pocket. Asn225 is a Mg(2+) binding site. Residues 228-248 are linker; it reads LQLAALERYYQHKQAERLLLE. Positions 249 to 454 are N-acetyltransferase; it reads GVMLIDPARF…AGWQRPTKKK (206 aa). Residues Arg331 and Lys349 each coordinate UDP-N-acetyl-alpha-D-glucosamine. Residue His361 is the Proton acceptor of the active site. Residues Tyr364 and Asn375 each contribute to the UDP-N-acetyl-alpha-D-glucosamine site. Residues Ala378, 384–385, Ser403, Ala421, and Arg438 each bind acetyl-CoA; that span reads NY.

It in the N-terminal section; belongs to the N-acetylglucosamine-1-phosphate uridyltransferase family. In the C-terminal section; belongs to the transferase hexapeptide repeat family. Homotrimer. Mg(2+) is required as a cofactor.

Its subcellular location is the cytoplasm. It catalyses the reaction alpha-D-glucosamine 1-phosphate + acetyl-CoA = N-acetyl-alpha-D-glucosamine 1-phosphate + CoA + H(+). The catalysed reaction is N-acetyl-alpha-D-glucosamine 1-phosphate + UTP + H(+) = UDP-N-acetyl-alpha-D-glucosamine + diphosphate. It functions in the pathway nucleotide-sugar biosynthesis; UDP-N-acetyl-alpha-D-glucosamine biosynthesis; N-acetyl-alpha-D-glucosamine 1-phosphate from alpha-D-glucosamine 6-phosphate (route II): step 2/2. Its pathway is nucleotide-sugar biosynthesis; UDP-N-acetyl-alpha-D-glucosamine biosynthesis; UDP-N-acetyl-alpha-D-glucosamine from N-acetyl-alpha-D-glucosamine 1-phosphate: step 1/1. It participates in bacterial outer membrane biogenesis; LPS lipid A biosynthesis. In terms of biological role, catalyzes the last two sequential reactions in the de novo biosynthetic pathway for UDP-N-acetylglucosamine (UDP-GlcNAc). The C-terminal domain catalyzes the transfer of acetyl group from acetyl coenzyme A to glucosamine-1-phosphate (GlcN-1-P) to produce N-acetylglucosamine-1-phosphate (GlcNAc-1-P), which is converted into UDP-GlcNAc by the transfer of uridine 5-monophosphate (from uridine 5-triphosphate), a reaction catalyzed by the N-terminal domain. This Mannheimia succiniciproducens (strain KCTC 0769BP / MBEL55E) protein is Bifunctional protein GlmU.